The following is a 260-amino-acid chain: MIRVDGRTTDQLRDVTIERGWQEHAEGSALISAGRTRVLCAASVTEGVPRWRKGSGLGWVTAEYSMLPRATHTRNDRESVRGRIGGRTHEISRLIGRSLRAAIDLKALGENTIAIDCDVLLADGGTRTAAITGAYVALADACRWLGRPAAIVTSVCAVSVGVVGGVPMLDLAYTEDSTADTDMNVVRTGAGGFVEVQGTAEGTPFERSTLDELLDLAVAGCTRLTEIQNAALAAPPAAGPPAPERAGAGSGSGGKGTGSR.

Phosphate is bound by residues Arg-87 and 125–127 (GTR). Positions 232–260 (LAAPPAAGPPAPERAGAGSGSGGKGTGSR) are disordered. Residues 248 to 260 (AGSGSGGKGTGSR) are compositionally biased toward gly residues.

It belongs to the RNase PH family. In terms of assembly, homohexameric ring arranged as a trimer of dimers.

It catalyses the reaction tRNA(n+1) + phosphate = tRNA(n) + a ribonucleoside 5'-diphosphate. Functionally, phosphorolytic 3'-5' exoribonuclease that plays an important role in tRNA 3'-end maturation. Removes nucleotide residues following the 3'-CCA terminus of tRNAs; can also add nucleotides to the ends of RNA molecules by using nucleoside diphosphates as substrates, but this may not be physiologically important. Probably plays a role in initiation of 16S rRNA degradation (leading to ribosome degradation) during starvation. This is Ribonuclease PH from Parafrankia sp. (strain EAN1pec).